The primary structure comprises 4083 residues: Dynein axonemal heavy chain 3 (4083 aa).

2 disordered regions span residues 1–37 (MSDT…VSAN) and 111–132 (DKTS…PSKK). Residues 1–1357 (MSDTNCSAQK…HVQMITTEAL (1357 aa)) are stem. Coiled-coil stretches lie at residues 1026–1052 (IKPI…AWLK) and 1108–1133 (RMTE…YLEK). AAA stretches follow at residues 1358-1579 (YGYE…VLTA), 1639-1870 (EALN…LHCK), 2003-2251 (TIPA…VIQG), and 2362-2613 (EFNS…LLRH). ATP-binding positions include 1396-1403 (GPAGTGKT), 1677-1684 (GDPMGGKT), 2041-2048 (GPTGTGKS), and 2401-2408 (GIGGSGRQ). A stalk region spans residues 2628–2927 (FKTLLNSKRQ…NSLEKNIEIC (300 aa)). Residues 2651 to 2714 (QKLEFASSQV…DEKEANAAAA (64 aa)) are a coiled coil. AAA regions lie at residues 3012–3242 (LGDP…EISE) and 3455–3679 (IQNF…QIQM).

It belongs to the dynein heavy chain family. As to quaternary structure, consists of at least two heavy chains and a number of intermediate and light chains.

It localises to the cytoplasm. It is found in the cytoskeleton. The protein localises to the cilium axoneme. Force generating protein of respiratory cilia. Produces force towards the minus ends of microtubules. Dynein has ATPase activity; the force-producing power stroke is thought to occur on release of ADP. Involved in sperm motility; implicated in sperm flagellar assembly. In Mus musculus (Mouse), this protein is Dynein axonemal heavy chain 3 (Dnah3).